The chain runs to 133 residues: Agglutinin alpha chain (133 aa).

A Jacalin-type lectin domain is found at 1-133; it reads GVTFDDGAYT…LDYFSIYLSL (133 aa).

Belongs to the jacalin lectin family. Formed of four alpha chains and four beta chains.

In terms of biological role, D-galactose-specific lectin, binds the T-antigen structure Gal-beta1,3-GalNAc. The chain is Agglutinin alpha chain from Maclura pomifera (Osage orange).